The primary structure comprises 144 residues: Large ribosomal subunit protein uL16 (144 aa).

A compositionally biased stretch (basic residues) spans 1–17 (MLQPKKTKFRRQQKGRA). The interval 1–22 (MLQPKKTKFRRQQKGRAKGNAQ) is disordered.

The protein belongs to the universal ribosomal protein uL16 family. In terms of assembly, part of the 50S ribosomal subunit.

In terms of biological role, binds 23S rRNA and is also seen to make contacts with the A and possibly P site tRNAs. The polypeptide is Large ribosomal subunit protein uL16 (Bacteroides thetaiotaomicron (strain ATCC 29148 / DSM 2079 / JCM 5827 / CCUG 10774 / NCTC 10582 / VPI-5482 / E50)).